The primary structure comprises 308 residues: Ribonuclease HIII (308 aa).

In terms of domain architecture, RNase H type-2 spans 91–308 (KNVIGSDEVG…TEKALKMVKK (218 aa)). Residues D97, E98, and D202 each coordinate a divalent metal cation.

This sequence belongs to the RNase HII family. RnhC subfamily. Requires Mn(2+) as cofactor. Mg(2+) serves as cofactor.

It localises to the cytoplasm. It carries out the reaction Endonucleolytic cleavage to 5'-phosphomonoester.. Functionally, endonuclease that specifically degrades the RNA of RNA-DNA hybrids. This Listeria monocytogenes serotype 4b (strain CLIP80459) protein is Ribonuclease HIII.